The chain runs to 505 residues: Cyclic AMP-dependent transcription factor ATF-2 (505 aa).

A Nuclear export signal 1 (N-NES) motif is present at residues 1-7; that stretch reads MKFKLHV. A C2H2-type zinc finger spans residues 25–49; it reads FLCTAPGCGQRFTNEDHLAVHKHKH. The residue at position 52 (threonine 52) is a Phosphothreonine; by PKC/PRKCH. Serine 62 is subject to Phosphoserine; by VRK1. The residue at position 69 (threonine 69) is a Phosphothreonine; by MAPK11 and MAPK14. The residue at position 71 (threonine 71) is a Phosphothreonine; by MAPK1, MAPK3, MAPK11, MAPK12, MAPK14 and PLK3. Threonine 73 carries the post-translational modification Phosphothreonine; by VRK1. 2 positions are modified to phosphoserine: serine 90 and serine 112. The residue at position 116 (threonine 116) is a Phosphothreonine. A Phosphoserine; by PKC/PRKCA and PKC/PRKCB modification is found at serine 121. Disordered stretches follow at residues 125–155 and 259–373; these read EPSV…PLAQ and PGIP…RQKR. Position 136 is a phosphoserine (serine 136). Residues 282-293 are compositionally biased toward polar residues; sequence LTQQHPPVTNGD. The segment at 296 to 299 is essential for its histone acetyltransferase activity; sequence KGHG. Residues 318–334 show a composition bias toward low complexity; sequence PATSTTETPASPAHTTP. Serine 328 is subject to Phosphoserine. Serine 340 is subject to Phosphoserine; by PKC/PRKCA and PKC/PRKCB. The segment covering 346-363 has biased composition (basic and acidic residues); it reads AANEDPDEKRRKFLERNR. The bZIP domain maps to 352–415; it reads DEKRRKFLER…AQLKQLLLAH (64 aa). Residues 354 to 374 form a basic motif region; the sequence is KRRKFLERNRAAASRCRQKRK. Lysine 357 bears the N6-acetyllysine mark. Residue serine 367 is modified to Phosphoserine; by PKC/PRKCA and PKC/PRKCB. Lysine 374 bears the N6-acetyllysine mark. The tract at residues 380-408 is leucine-zipper; it reads LEKKAEDLSSLNGQLQSEVTLLRNEVAQL. The short motif at 405 to 414 is the Nuclear export signal 2 (C-NES) element; that stretch reads VAQLKQLLLA. Positions 425–472 are disordered; it reads KKSGYHTADKDDSSEDISVPSSPHTEAIQHSSVSTSNGVSSTSKAEAV. 2 positions are modified to phosphoserine: serine 442 and serine 446. Residues 443–454 show a composition bias toward polar residues; sequence VPSSPHTEAIQH. Over residues 455–467 the composition is skewed to low complexity; it reads SSVSTSNGVSSTS. Serine 490 and serine 498 each carry phosphoserine; by ATM.

This sequence belongs to the bZIP family. ATF subfamily. In terms of assembly, binds DNA as a dimer and can form a homodimer in the absence of DNA. Can form a heterodimer with JUN. Heterodimerization is essential for its transcriptional activity. Interacts with SMAD3 and SMAD4. Binds through its N-terminal region to UTF1 which acts as a coactivator of ATF2 transcriptional activity. Interacts with the HK1/VDAC1 complex. Interacts with NBN, MRE11, XPO1, KAT5 and CUL3. Phosphorylation of Thr-69 by MAPK14 and MAPK11, and at Thr-71 by MAPK1/ERK2, MAPK3/ERK1, MAPK11, MAPK12 and MAPK14 in response to external stimulus like insulin causes increased transcriptional activity. Phosphorylated by PLK3 following hyperosmotic stress. Also phosphorylated and activated by JNK and CaMK4. ATM-mediated phosphorylation at Ser-490 and Ser-498 stimulates its function in DNA damage response. Phosphorylation at Ser-62, Thr-73 and Ser-121 activates its transcriptional activity. Phosphorylation at Thr-69 or Thr-71 enhances acetylation of histones H2B and H4. Ubiquitously expressed, with more abundant expression in the brain.

Its subcellular location is the nucleus. The protein resides in the cytoplasm. It is found in the mitochondrion outer membrane. In terms of biological role, transcriptional activator which regulates the transcription of various genes, including those involved in anti-apoptosis, cell growth, and DNA damage response. Dependent on its binding partner, binds to CRE (cAMP response element) consensus sequences (5'-TGACGTCA-3') or to AP-1 (activator protein 1) consensus sequences (5'-TGACTCA-3'). In the nucleus, contributes to global transcription and the DNA damage response, in addition to specific transcriptional activities that are related to cell development, proliferation and death. In the cytoplasm, interacts with and perturbs HK1- and VDAC1-containing complexes at the mitochondrial outer membrane, thereby impairing mitochondrial membrane potential, inducing mitochondrial leakage and promoting cell death. The phosphorylated form (mediated by ATM) plays a role in the DNA damage response and is involved in the ionizing radiation (IR)-induced S phase checkpoint control and in the recruitment of the MRN complex into the IR-induced foci (IRIF). Exhibits histone acetyltransferase (HAT) activity which specifically acetylates histones H2B and H4 in vitro. In concert with CUL3 and RBX1, promotes the degradation of KAT5 thereby attenuating its ability to acetylate and activate ATM. Can elicit oncogenic or tumor suppressor activities depending on the tissue or cell type. The protein is Cyclic AMP-dependent transcription factor ATF-2 (ATF2) of Homo sapiens (Human).